The chain runs to 427 residues: Trigger factor (427 aa).

The PPIase FKBP-type domain occupies 163–248 (GDTVILDFEG…LHEIKTKEVP (86 aa)).

This sequence belongs to the FKBP-type PPIase family. Tig subfamily.

It is found in the cytoplasm. The enzyme catalyses [protein]-peptidylproline (omega=180) = [protein]-peptidylproline (omega=0). Its function is as follows. Involved in protein export. Acts as a chaperone by maintaining the newly synthesized protein in an open conformation. Functions as a peptidyl-prolyl cis-trans isomerase. In Listeria monocytogenes serotype 4a (strain HCC23), this protein is Trigger factor.